Consider the following 126-residue polypeptide: Small ribosomal subunit protein uS13 (126 aa).

The tract at residues 92-126 (HRRGLPVRGQRTKTNARTRKGPKKTVAGKKKATRK) is disordered.

The protein belongs to the universal ribosomal protein uS13 family. In terms of assembly, part of the 30S ribosomal subunit. Forms a loose heterodimer with protein S19. Forms two bridges to the 50S subunit in the 70S ribosome.

Functionally, located at the top of the head of the 30S subunit, it contacts several helices of the 16S rRNA. In the 70S ribosome it contacts the 23S rRNA (bridge B1a) and protein L5 of the 50S subunit (bridge B1b), connecting the 2 subunits; these bridges are implicated in subunit movement. Contacts the tRNAs in the A and P-sites. The sequence is that of Small ribosomal subunit protein uS13 from Deinococcus radiodurans (strain ATCC 13939 / DSM 20539 / JCM 16871 / CCUG 27074 / LMG 4051 / NBRC 15346 / NCIMB 9279 / VKM B-1422 / R1).